The following is a 421-amino-acid chain: Gamma-glutamyl phosphate reductase (421 aa).

Belongs to the gamma-glutamyl phosphate reductase family.

Its subcellular location is the cytoplasm. The enzyme catalyses L-glutamate 5-semialdehyde + phosphate + NADP(+) = L-glutamyl 5-phosphate + NADPH + H(+). It participates in amino-acid biosynthesis; L-proline biosynthesis; L-glutamate 5-semialdehyde from L-glutamate: step 2/2. Catalyzes the NADPH-dependent reduction of L-glutamate 5-phosphate into L-glutamate 5-semialdehyde and phosphate. The product spontaneously undergoes cyclization to form 1-pyrroline-5-carboxylate. This chain is Gamma-glutamyl phosphate reductase, found in Dinoroseobacter shibae (strain DSM 16493 / NCIMB 14021 / DFL 12).